Reading from the N-terminus, the 469-residue chain is Bifunctional protein GlmU (469 aa).

Positions 1-236 (MLNIKLNIVI…ISEINGINDC (236 aa)) are pyrophosphorylase. UDP-N-acetyl-alpha-D-glucosamine is bound by residues 11-14 (LAAG), Lys-25, Gln-83, 88-89 (GT), 110-112 (YGD), Gly-147, Glu-161, Asn-176, and Asn-234. A Mg(2+)-binding site is contributed by Asp-112. Residue Asn-234 coordinates Mg(2+). The tract at residues 237–257 (AQLANLERLYQKEQAESLLRI) is linker. Residues 258-469 (GVIIADPNRF…KKKIRYNIIY (212 aa)) are N-acetyltransferase. 2 residues coordinate UDP-N-acetyl-alpha-D-glucosamine: Arg-340 and Lys-358. His-370 acts as the Proton acceptor in catalysis. Residues Tyr-373 and Asn-384 each coordinate UDP-N-acetyl-alpha-D-glucosamine. Acetyl-CoA-binding positions include Ala-387, 393-394 (NY), Ser-412, Ala-430, and Arg-447.

It in the N-terminal section; belongs to the N-acetylglucosamine-1-phosphate uridyltransferase family. The protein in the C-terminal section; belongs to the transferase hexapeptide repeat family. Homotrimer. Mg(2+) serves as cofactor.

The protein resides in the cytoplasm. The enzyme catalyses alpha-D-glucosamine 1-phosphate + acetyl-CoA = N-acetyl-alpha-D-glucosamine 1-phosphate + CoA + H(+). It carries out the reaction N-acetyl-alpha-D-glucosamine 1-phosphate + UTP + H(+) = UDP-N-acetyl-alpha-D-glucosamine + diphosphate. It functions in the pathway nucleotide-sugar biosynthesis; UDP-N-acetyl-alpha-D-glucosamine biosynthesis; N-acetyl-alpha-D-glucosamine 1-phosphate from alpha-D-glucosamine 6-phosphate (route II): step 2/2. Its pathway is nucleotide-sugar biosynthesis; UDP-N-acetyl-alpha-D-glucosamine biosynthesis; UDP-N-acetyl-alpha-D-glucosamine from N-acetyl-alpha-D-glucosamine 1-phosphate: step 1/1. The protein operates within bacterial outer membrane biogenesis; LPS lipid A biosynthesis. Functionally, catalyzes the last two sequential reactions in the de novo biosynthetic pathway for UDP-N-acetylglucosamine (UDP-GlcNAc). The C-terminal domain catalyzes the transfer of acetyl group from acetyl coenzyme A to glucosamine-1-phosphate (GlcN-1-P) to produce N-acetylglucosamine-1-phosphate (GlcNAc-1-P), which is converted into UDP-GlcNAc by the transfer of uridine 5-monophosphate (from uridine 5-triphosphate), a reaction catalyzed by the N-terminal domain. This Baumannia cicadellinicola subsp. Homalodisca coagulata protein is Bifunctional protein GlmU.